Here is a 447-residue protein sequence, read N- to C-terminus: Glutamate--tRNA ligase 2 (447 aa).

The short motif at 8-18 is the 'HIGH' region element; that stretch reads PSPTGYLHVGN. A 'KMSKS' region motif is present at residues 239-243; it reads KLSKR. Residue Lys-242 participates in ATP binding.

It belongs to the class-I aminoacyl-tRNA synthetase family. Glutamate--tRNA ligase type 1 subfamily. In terms of assembly, monomer.

The protein resides in the cytoplasm. The enzyme catalyses tRNA(Glu) + L-glutamate + ATP = L-glutamyl-tRNA(Glu) + AMP + diphosphate. Its function is as follows. Catalyzes the attachment of glutamate to tRNA(Glu) in a two-step reaction: glutamate is first activated by ATP to form Glu-AMP and then transferred to the acceptor end of tRNA(Glu). The sequence is that of Glutamate--tRNA ligase 2 from Granulibacter bethesdensis (strain ATCC BAA-1260 / CGDNIH1).